The primary structure comprises 379 residues: Glutamate 5-kinase (379 aa).

An ATP-binding site is contributed by K19. The substrate site is built by S59, D146, and N158. ATP is bound by residues 178–179 and 220–226; these read TD and TGGMATK. Residues 285–363 enclose the PUA domain; sequence SGDIVIDQGA…KDIISILGYD (79 aa).

Belongs to the glutamate 5-kinase family.

The protein localises to the cytoplasm. It catalyses the reaction L-glutamate + ATP = L-glutamyl 5-phosphate + ADP. It participates in amino-acid biosynthesis; L-proline biosynthesis; L-glutamate 5-semialdehyde from L-glutamate: step 1/2. Functionally, catalyzes the transfer of a phosphate group to glutamate to form L-glutamate 5-phosphate. The protein is Glutamate 5-kinase of Vibrio vulnificus (strain YJ016).